The chain runs to 213 residues: Imidazole glycerol phosphate synthase subunit HisH 1 (213 aa).

Residues 3-213 (SVSILDYGVG…LSIIQQFLQI (211 aa)) enclose the Glutamine amidotransferase type-1 domain. Catalysis depends on Cys-81, which acts as the Nucleophile. Residues His-195 and Glu-197 contribute to the active site.

Heterodimer of HisH and HisF.

The protein localises to the cytoplasm. It catalyses the reaction 5-[(5-phospho-1-deoxy-D-ribulos-1-ylimino)methylamino]-1-(5-phospho-beta-D-ribosyl)imidazole-4-carboxamide + L-glutamine = D-erythro-1-(imidazol-4-yl)glycerol 3-phosphate + 5-amino-1-(5-phospho-beta-D-ribosyl)imidazole-4-carboxamide + L-glutamate + H(+). The enzyme catalyses L-glutamine + H2O = L-glutamate + NH4(+). The protein operates within amino-acid biosynthesis; L-histidine biosynthesis; L-histidine from 5-phospho-alpha-D-ribose 1-diphosphate: step 5/9. Its function is as follows. IGPS catalyzes the conversion of PRFAR and glutamine to IGP, AICAR and glutamate. The HisH subunit provides the glutamine amidotransferase activity that produces the ammonia necessary to HisF for the synthesis of IGP and AICAR. The chain is Imidazole glycerol phosphate synthase subunit HisH 1 from Legionella pneumophila (strain Lens).